A 371-amino-acid chain; its full sequence is Putative F-box/kelch-repeat protein At3g10510 (371 aa).

An F-box domain is found at 13-61; that stretch reads SVMTSIPDDVIMECIAPRVPRYNHSMLSLVSKQFRSLVASPRLYKTRSL. Kelch repeat units lie at residues 123–165, 178–229, and 257–305; these read NIFV…DMPV, KIYI…GPSS, and NECV…YIVS.

The polypeptide is Putative F-box/kelch-repeat protein At3g10510 (Arabidopsis thaliana (Mouse-ear cress)).